Consider the following 304-residue polypeptide: Glycine--tRNA ligase alpha subunit (304 aa).

The protein belongs to the class-II aminoacyl-tRNA synthetase family. As to quaternary structure, tetramer of two alpha and two beta subunits.

It is found in the cytoplasm. It carries out the reaction tRNA(Gly) + glycine + ATP = glycyl-tRNA(Gly) + AMP + diphosphate. In Actinobacillus pleuropneumoniae serotype 3 (strain JL03), this protein is Glycine--tRNA ligase alpha subunit.